The primary structure comprises 430 residues: Enolase (430 aa).

Residue glutamine 165 coordinates (2R)-2-phosphoglycerate. Glutamate 207 (proton donor) is an active-site residue. 3 residues coordinate Mg(2+): aspartate 244, glutamate 287, and aspartate 314. The (2R)-2-phosphoglycerate site is built by lysine 339, arginine 368, serine 369, and lysine 390. Residue lysine 339 is the Proton acceptor of the active site.

It belongs to the enolase family. As to quaternary structure, component of the RNA degradosome, a multiprotein complex involved in RNA processing and mRNA degradation. The cofactor is Mg(2+).

The protein resides in the cytoplasm. The protein localises to the secreted. It is found in the cell surface. The enzyme catalyses (2R)-2-phosphoglycerate = phosphoenolpyruvate + H2O. It participates in carbohydrate degradation; glycolysis; pyruvate from D-glyceraldehyde 3-phosphate: step 4/5. Its function is as follows. Catalyzes the reversible conversion of 2-phosphoglycerate (2-PG) into phosphoenolpyruvate (PEP). It is essential for the degradation of carbohydrates via glycolysis. In Stenotrophomonas maltophilia (strain K279a), this protein is Enolase.